A 1084-amino-acid chain; its full sequence is Ribonucleoside-diphosphate reductase NrdEB subunit alpha (1084 aa).

Residues T152, 168-169 (SC), and G197 contribute to the substrate site. Cysteines 169 and 793 form a disulfide. Catalysis depends on N379, which acts as the Proton acceptor. C381 functions as the Cysteine radical intermediate in the catalytic mechanism. A DOD-type homing endonuclease domain is found at 503–654 (IMGIIAGDGT…VQKLLLNMGV (152 aa)). E768 (proton acceptor) is an active-site residue. 964 to 968 (PTGSI) contacts substrate.

Belongs to the ribonucleoside diphosphate reductase large chain family. Tetramer of two alpha and two beta subunits. Post-translationally, this protein undergoes protein self-splicing that involves post-translational excision of the intervening region (intein) followed by peptide ligation.

The catalysed reaction is a 2'-deoxyribonucleoside 5'-diphosphate + [thioredoxin]-disulfide + H2O = a ribonucleoside 5'-diphosphate + [thioredoxin]-dithiol. Under complex allosteric control mediated by deoxynucleoside triphosphates and ATP binding. The type of nucleotide bound at the specificity site determines substrate preference. It seems probable that ATP makes the enzyme reduce CDP and UDP, dGTP favors ADP reduction and dTTP favors GDP reduction. Provides the precursors necessary for DNA synthesis. Catalyzes the biosynthesis of deoxyribonucleotides from the corresponding ribonucleotides. The sequence is that of Ribonucleoside-diphosphate reductase NrdEB subunit alpha (nrdEB) from Bacillus subtilis (strain 168).